A 438-amino-acid polypeptide reads, in one-letter code: DNA polymerase IV 1 (438 aa).

The 181-residue stretch at 46–226 (LAHIDCDAFY…KPVTMIWGVG (181 aa)) folds into the UmuC domain. Mg(2+)-binding residues include Asp-50 and Asp-143. Glu-144 is a catalytic residue.

Belongs to the DNA polymerase type-Y family. In terms of assembly, monomer. Mg(2+) is required as a cofactor.

Its subcellular location is the cytoplasm. The catalysed reaction is DNA(n) + a 2'-deoxyribonucleoside 5'-triphosphate = DNA(n+1) + diphosphate. Its function is as follows. Poorly processive, error-prone DNA polymerase involved in untargeted mutagenesis. Copies undamaged DNA at stalled replication forks, which arise in vivo from mismatched or misaligned primer ends. These misaligned primers can be extended by PolIV. Exhibits no 3'-5' exonuclease (proofreading) activity. May be involved in translesional synthesis, in conjunction with the beta clamp from PolIII. The polypeptide is DNA polymerase IV 1 (dinB1) (Mesorhizobium japonicum (strain LMG 29417 / CECT 9101 / MAFF 303099) (Mesorhizobium loti (strain MAFF 303099))).